A 146-amino-acid polypeptide reads, in one-letter code: Horcolin (146 aa).

Positions methionine 1–glutamine 21 are disordered. A Jacalin-type lectin domain is found at proline 4–proline 146.

The protein belongs to the jacalin lectin family.

It localises to the secreted. The protein resides in the extracellular space. The protein localises to the apoplast. Mannose-specific lectin. Has a weak agglutinating activity against rabbit erythrocytes. The sequence is that of Horcolin from Hordeum vulgare (Barley).